The following is a 263-amino-acid chain: Glutamate racemase (263 aa).

Substrate is bound by residues aspartate 13 to serine 14 and tyrosine 45 to glycine 46. The Proton donor/acceptor role is filled by cysteine 77. Asparagine 78–threonine 79 is a binding site for substrate. Cysteine 185 (proton donor/acceptor) is an active-site residue. Residue threonine 186–histidine 187 participates in substrate binding.

Belongs to the aspartate/glutamate racemases family.

The enzyme catalyses L-glutamate = D-glutamate. It functions in the pathway cell wall biogenesis; peptidoglycan biosynthesis. Its function is as follows. Provides the (R)-glutamate required for cell wall biosynthesis. This is Glutamate racemase from Vibrio vulnificus (strain YJ016).